We begin with the raw amino-acid sequence, 316 residues long: Ribosomal RNA small subunit methyltransferase H (316 aa).

S-adenosyl-L-methionine is bound by residues 36 to 38, Asp56, Phe83, Asp104, and Gln111; that span reads GGH.

This sequence belongs to the methyltransferase superfamily. RsmH family.

It localises to the cytoplasm. It catalyses the reaction cytidine(1402) in 16S rRNA + S-adenosyl-L-methionine = N(4)-methylcytidine(1402) in 16S rRNA + S-adenosyl-L-homocysteine + H(+). Functionally, specifically methylates the N4 position of cytidine in position 1402 (C1402) of 16S rRNA. This Protochlamydia amoebophila (strain UWE25) protein is Ribosomal RNA small subunit methyltransferase H.